A 220-amino-acid chain; its full sequence is Adenylate kinase (220 aa).

10-15 (GAGKGT) serves as a coordination point for ATP. The tract at residues 30–59 (STGDMLRAAVKAGTPLGLKAKEVMDGGNLV) is NMP. AMP-binding positions include Thr-31, Arg-36, 57–59 (NLV), 85–88 (GFPR), and Gln-92. The tract at residues 122–159 (GRRVHPASGRTYHIRFNPPQTAGMDDETGEPLVQRADD) is LID. Residues Arg-123 and 132–133 (TY) contribute to the ATP site. AMP is bound by residues Arg-156 and Arg-167. Gly-205 provides a ligand contact to ATP.

Belongs to the adenylate kinase family. As to quaternary structure, monomer.

The protein resides in the cytoplasm. It catalyses the reaction AMP + ATP = 2 ADP. The protein operates within purine metabolism; AMP biosynthesis via salvage pathway; AMP from ADP: step 1/1. Its function is as follows. Catalyzes the reversible transfer of the terminal phosphate group between ATP and AMP. Plays an important role in cellular energy homeostasis and in adenine nucleotide metabolism. This is Adenylate kinase from Chlorobium luteolum (strain DSM 273 / BCRC 81028 / 2530) (Pelodictyon luteolum).